A 403-amino-acid chain; its full sequence is Casein kinase II subunit alpha-2 (403 aa).

An N-terminal signal peptide occupies residues 1 to 31; it reads MHLIFFFSYFLRRYLLLLCAILILRAPLAHS. The region spanning 104-389 is the Protein kinase domain; it reads YEVVRKVGRG…AKEAMAHPYF (286 aa). ATP contacts are provided by residues 110-118 and lysine 133; that span reads VGRGKYSEV. N-linked (GlcNAc...) asparagine glycosylation occurs at asparagine 182. The Proton acceptor role is filled by aspartate 221.

It belongs to the protein kinase superfamily. Ser/Thr protein kinase family. CK2 subfamily. As to quaternary structure, heterotetramer of two catalytic alpha subunits and two regulatory beta subunits. In terms of tissue distribution, seems to be present in all plant organs. But seems to be more expressed than CKA1.

Its subcellular location is the nucleus. The protein localises to the nucleolus. The enzyme catalyses L-seryl-[protein] + ATP = O-phospho-L-seryl-[protein] + ADP + H(+). It catalyses the reaction L-threonyl-[protein] + ATP = O-phospho-L-threonyl-[protein] + ADP + H(+). Casein kinases are operationally defined by their preferential utilization of acidic proteins such as caseins as substrates. The alpha chain contains the catalytic site. The tetrameric holoenzyme CK2, composed of two alpha and two beta subunits, phosphorylates the transcription factor PIF1 after an exposure to light, resulting in a proteasome-dependent degradation of PIF1 and promotion of photomorphogenesis. CK2 phosphorylates translation initiation factors. May participate in the regulation of the initiation of translation. Acts as circadian clock component that maintains the correct period length through phosphorylation of CCA1. May act as an ectokinase that phosphorylates several extracellular proteins. This Arabidopsis thaliana (Mouse-ear cress) protein is Casein kinase II subunit alpha-2.